A 158-amino-acid polypeptide reads, in one-letter code: uncharacterized protein (158 aa).

An FPG-type zinc finger spans residues 109–143; sequence RVHARTGLPCPVCGDTVREVSFADKSFQYCPTCQT.

This is an uncharacterized protein from Mycobacterium tuberculosis (strain ATCC 25618 / H37Rv).